The following is a 422-amino-acid chain: Probable glucuronosyltransferase Os01g0926400 (422 aa).

Residues 1–8 lie on the Cytoplasmic side of the membrane; the sequence is MGTRPCAG. A helical; Signal-anchor for type II membrane protein transmembrane segment spans residues 9-29; the sequence is VASAVAAAVAVLLLAVSCFAA. The Lumenal segment spans residues 30–422; that stretch reads AATTTQKHGR…QGLENDLKPW (393 aa). Asn-149 carries N-linked (GlcNAc...) asparagine glycosylation.

This sequence belongs to the glycosyltransferase 47 family.

The protein resides in the golgi apparatus membrane. Its function is as follows. Involved in the synthesis of glucuronoxylan hemicellulose in secondary cell walls. The polypeptide is Probable glucuronosyltransferase Os01g0926400 (Oryza sativa subsp. japonica (Rice)).